The primary structure comprises 690 residues: Polyphosphate kinase (690 aa).

Position 45 (N45) interacts with ATP. Mg(2+)-binding residues include R375 and R405. H435 (phosphohistidine intermediate) is an active-site residue. The ATP site is built by Y468, R564, and H592.

It belongs to the polyphosphate kinase 1 (PPK1) family. It depends on Mg(2+) as a cofactor. In terms of processing, an intermediate of this reaction is the autophosphorylated ppk in which a phosphate is covalently linked to a histidine residue through a N-P bond.

It carries out the reaction [phosphate](n) + ATP = [phosphate](n+1) + ADP. In terms of biological role, catalyzes the reversible transfer of the terminal phosphate of ATP to form a long-chain polyphosphate (polyP). In Pseudomonas aeruginosa (strain ATCC 15692 / DSM 22644 / CIP 104116 / JCM 14847 / LMG 12228 / 1C / PRS 101 / PAO1), this protein is Polyphosphate kinase.